Here is a 217-residue protein sequence, read N- to C-terminus: GTPase IMAP family member GIMD1 (217 aa).

Residues 6–217 (KMIINLALFG…ENCYQVLTFK (212 aa)) form the AIG1-type G domain. Residues 15–23 (GMTQSGKSS), Ser36, and 148–150 (HAE) contribute to the GTP site.

It belongs to the TRAFAC class TrmE-Era-EngA-EngB-Septin-like GTPase superfamily. AIG1/Toc34/Toc159-like paraseptin GTPase family. IAN subfamily.

This Homo sapiens (Human) protein is GTPase IMAP family member GIMD1 (GIMD1).